Reading from the N-terminus, the 338-residue chain is Heme A synthase (338 aa).

A run of 5 helical transmembrane segments spans residues 6–26 (ITKW…IGGI), 93–113 (GRIT…KGII), 118–138 (IAPY…GWYM), 154–174 (LAFH…QLIK), and 201–221 (VIYL…GLIY). His-256 provides a ligand contact to heme. Helical transmembrane passes span 258–278 (LGGY…LKIE), 285–305 (IAYF…ITLL), and 308–328 (VPII…SVII). Residue His-316 participates in heme binding.

It belongs to the COX15/CtaA family. Type 2 subfamily. As to quaternary structure, interacts with CtaB. Heme b serves as cofactor.

It is found in the cell membrane. The enzyme catalyses Fe(II)-heme o + 2 A + H2O = Fe(II)-heme a + 2 AH2. The protein operates within porphyrin-containing compound metabolism; heme A biosynthesis; heme A from heme O: step 1/1. Catalyzes the conversion of heme O to heme A by two successive hydroxylations of the methyl group at C8. The first hydroxylation forms heme I, the second hydroxylation results in an unstable dihydroxymethyl group, which spontaneously dehydrates, resulting in the formyl group of heme A. This is Heme A synthase from Rickettsia canadensis (strain McKiel).